We begin with the raw amino-acid sequence, 127 residues long: Fluoride-specific ion channel FluC (127 aa).

4 helical membrane passes run 4-24 (SLLV…LLGM), 37-57 (TVVA…FLAA), 68-88 (LIIT…AETV), and 96-116 (LLWA…MTAA). Residues glycine 75 and threonine 78 each contribute to the Na(+) site.

Belongs to the fluoride channel Fluc/FEX (TC 1.A.43) family.

Its subcellular location is the cell inner membrane. The enzyme catalyses fluoride(in) = fluoride(out). Na(+) is not transported, but it plays an essential structural role and its presence is essential for fluoride channel function. Fluoride-specific ion channel. Important for reducing fluoride concentration in the cell, thus reducing its toxicity. This chain is Fluoride-specific ion channel FluC, found in Pseudomonas syringae pv. maculicola.